The following is a 617-amino-acid chain: Glutamine--fructose-6-phosphate aminotransferase [isomerizing] (617 aa).

The active-site Nucleophile; for GATase activity is C2. The region spanning 2-222 is the Glutamine amidotransferase type-2 domain; the sequence is CGIIGLAFAE…DGEFGWISPE (221 aa). SIS domains lie at 293–432 and 466–607; these read AAGL…EAGR and AASL…PDKP. K612 serves as the catalytic For Fru-6P isomerization activity.

In terms of assembly, homodimer.

The protein localises to the cytoplasm. The enzyme catalyses D-fructose 6-phosphate + L-glutamine = D-glucosamine 6-phosphate + L-glutamate. In terms of biological role, catalyzes the first step in hexosamine metabolism, converting fructose-6P into glucosamine-6P using glutamine as a nitrogen source. The sequence is that of Glutamine--fructose-6-phosphate aminotransferase [isomerizing] from Aeropyrum pernix (strain ATCC 700893 / DSM 11879 / JCM 9820 / NBRC 100138 / K1).